The chain runs to 379 residues: UDP-N-acetylglucosamine--N-acetylmuramyl-(pentapeptide) pyrophosphoryl-undecaprenol N-acetylglucosamine transferase (379 aa).

Residues 17-19 (TGG), Asn128, Arg169, Ser197, and Gln298 contribute to the UDP-N-acetyl-alpha-D-glucosamine site.

The protein belongs to the glycosyltransferase 28 family. MurG subfamily.

It localises to the cell inner membrane. The catalysed reaction is di-trans,octa-cis-undecaprenyl diphospho-N-acetyl-alpha-D-muramoyl-L-alanyl-D-glutamyl-meso-2,6-diaminopimeloyl-D-alanyl-D-alanine + UDP-N-acetyl-alpha-D-glucosamine = di-trans,octa-cis-undecaprenyl diphospho-[N-acetyl-alpha-D-glucosaminyl-(1-&gt;4)]-N-acetyl-alpha-D-muramoyl-L-alanyl-D-glutamyl-meso-2,6-diaminopimeloyl-D-alanyl-D-alanine + UDP + H(+). It functions in the pathway cell wall biogenesis; peptidoglycan biosynthesis. In terms of biological role, cell wall formation. Catalyzes the transfer of a GlcNAc subunit on undecaprenyl-pyrophosphoryl-MurNAc-pentapeptide (lipid intermediate I) to form undecaprenyl-pyrophosphoryl-MurNAc-(pentapeptide)GlcNAc (lipid intermediate II). This Brucella suis (strain ATCC 23445 / NCTC 10510) protein is UDP-N-acetylglucosamine--N-acetylmuramyl-(pentapeptide) pyrophosphoryl-undecaprenol N-acetylglucosamine transferase.